A 226-amino-acid polypeptide reads, in one-letter code: Transmembrane protein 204 (226 aa).

At 1–5 the chain is on the cytoplasmic side; that stretch reads MTVQK. Residues 6–26 traverse the membrane as a helical segment; that stretch reads LVATAVLVALVSLILNNAAAF. At 27–103 the chain is on the extracellular side; that stretch reads TPNWVYQTLE…LQFDMMRACN (77 aa). A helical membrane pass occupies residues 104 to 124; that stretch reads LVATAALAVGQITFILGLTGL. Over 125-136 the chain is Cytoplasmic; that stretch reads PLMSPESQCWEE. The chain crosses the membrane as a helical span at residues 137–157; it reads AMAAAFQLASFVLVIGLVTFY. Topologically, residues 158–170 are extracellular; that stretch reads RIGPYTNLSWSCY. The N-linked (GlcNAc...) asparagine glycan is linked to Asn-164. Residues 171 to 191 traverse the membrane as a helical segment; the sequence is LNIGACLLATLAAAMLIWNIL. The Cytoplasmic portion of the chain corresponds to 192–226; that stretch reads HRREDCMAPRVIVISRSLTARFRRGLDNDYVESPC.

The protein resides in the cell junction. It localises to the adherens junction. Its subcellular location is the cell membrane. Can influence paracellular permeability. Appears to be involved in cell-cell interactions through adherens. This Rattus norvegicus (Rat) protein is Transmembrane protein 204 (Tmem204).